The primary structure comprises 95 residues: Large ribosomal subunit protein uL23 (95 aa).

This sequence belongs to the universal ribosomal protein uL23 family. As to quaternary structure, part of the 50S ribosomal subunit. Contacts protein L29, and trigger factor when it is bound to the ribosome.

In terms of biological role, one of the early assembly proteins it binds 23S rRNA. One of the proteins that surrounds the polypeptide exit tunnel on the outside of the ribosome. Forms the main docking site for trigger factor binding to the ribosome. In Lawsonia intracellularis (strain PHE/MN1-00), this protein is Large ribosomal subunit protein uL23.